Consider the following 219-residue polypeptide: Triosephosphate isomerase (219 aa).

6–8 lines the substrate pocket; sequence NYK. Catalysis depends on His-90, which acts as the Electrophile. Catalysis depends on Glu-138, which acts as the Proton acceptor. Substrate-binding positions include Ile-143, Gly-178, and 199–200; that span reads AS.

The protein belongs to the triosephosphate isomerase family. Homotetramer; dimer of dimers.

The protein localises to the cytoplasm. It carries out the reaction D-glyceraldehyde 3-phosphate = dihydroxyacetone phosphate. Its pathway is carbohydrate biosynthesis; gluconeogenesis. The protein operates within carbohydrate degradation; glycolysis; D-glyceraldehyde 3-phosphate from glycerone phosphate: step 1/1. Involved in the gluconeogenesis. Catalyzes stereospecifically the conversion of dihydroxyacetone phosphate (DHAP) to D-glyceraldehyde-3-phosphate (G3P). This chain is Triosephosphate isomerase, found in Methanocaldococcus jannaschii (strain ATCC 43067 / DSM 2661 / JAL-1 / JCM 10045 / NBRC 100440) (Methanococcus jannaschii).